The chain runs to 278 residues: Sulfur carrier protein FdhD (278 aa).

The active-site Cysteine persulfide intermediate is cysteine 121. 260–265 (FCKPGR) provides a ligand contact to Mo-bis(molybdopterin guanine dinucleotide).

It belongs to the FdhD family.

It is found in the cytoplasm. Required for formate dehydrogenase (FDH) activity. Acts as a sulfur carrier protein that transfers sulfur from IscS to the molybdenum cofactor prior to its insertion into FDH. The protein is Sulfur carrier protein FdhD of Salmonella schwarzengrund (strain CVM19633).